A 205-amino-acid polypeptide reads, in one-letter code: Recombination protein RecR (205 aa).

The segment at 64–79 adopts a C4-type zinc-finger fold; that stretch reads CSRCYFITQGDLCAIC. Residues 87 to 182 form the Toprim domain; that stretch reads RVICVVEEPL…RVTRLARGLP (96 aa).

Belongs to the RecR family.

Functionally, may play a role in DNA repair. It seems to be involved in an RecBC-independent recombinational process of DNA repair. It may act with RecF and RecO. This is Recombination protein RecR from Roseiflexus sp. (strain RS-1).